The sequence spans 258 residues: Type III pantothenate kinase (258 aa).

6–13 provides a ligand contact to ATP; sequence DVGNTQIF. A substrate-binding site is contributed by 107-110; that stretch reads GADR. Catalysis depends on Asp109, which acts as the Proton acceptor. Asp130 contacts K(+). Thr133 is a binding site for ATP. Residue Thr185 coordinates substrate.

It belongs to the type III pantothenate kinase family. Homodimer. The cofactor is NH4(+). It depends on K(+) as a cofactor.

Its subcellular location is the cytoplasm. The catalysed reaction is (R)-pantothenate + ATP = (R)-4'-phosphopantothenate + ADP + H(+). It functions in the pathway cofactor biosynthesis; coenzyme A biosynthesis; CoA from (R)-pantothenate: step 1/5. Functionally, catalyzes the phosphorylation of pantothenate (Pan), the first step in CoA biosynthesis. The polypeptide is Type III pantothenate kinase (Elusimicrobium minutum (strain Pei191)).